The following is a 25-amino-acid chain: Tubulin alpha chain (25 aa).

Residue Q11 coordinates GTP.

It belongs to the tubulin family. Dimer of alpha and beta chains. A typical microtubule is a hollow water-filled tube with an outer diameter of 25 nm and an inner diameter of 15 nM. Alpha-beta heterodimers associate head-to-tail to form protofilaments running lengthwise along the microtubule wall with the beta-tubulin subunit facing the microtubule plus end conferring a structural polarity. Microtubules usually have 13 protofilaments but different protofilament numbers can be found in some organisms and specialized cells. It depends on Mg(2+) as a cofactor.

It localises to the cytoplasm. The protein resides in the cytoskeleton. The enzyme catalyses GTP + H2O = GDP + phosphate + H(+). Functionally, tubulin is the major constituent of microtubules, a cylinder consisting of laterally associated linear protofilaments composed of alpha- and beta-tubulin heterodimers. Microtubules grow by the addition of GTP-tubulin dimers to the microtubule end, where a stabilizing cap forms. Below the cap, tubulin dimers are in GDP-bound state, owing to GTPase activity of alpha-tubulin. This Leptomonas seymouri protein is Tubulin alpha chain.